A 656-amino-acid chain; its full sequence is ATP-dependent RNA helicase MRH4, mitochondrial (656 aa).

The N-terminal 46 residues, 1-46 (MTSFSHLSRLRMSAFLPHVCLQCRLKTVSSLPAQSSASSLLQAVRH), are a transit peptide targeting the mitochondrion. The tract at residues 42–125 (QAVRHASSAR…KDKDGSEKKQ (84 aa)) is disordered. The segment covering 60-71 (MTLSPNVAQSTV) has biased composition (polar residues). Residues 96 to 125 (NLRDRQRPRSQAELKRTSFKKDKDGSEKKQ) are compositionally biased toward basic and acidic residues. A Q motif motif is present at residues 157 to 190 (TSFDQFDLLPSVRQSVYDSALPGLEYVTPTPIQR). The region spanning 210–431 (QEDMPRFDQY…RERFPQIRRL (222 aa)) is the Helicase ATP-binding domain. Position 223-230 (223-230 (AETGSGKT)) interacts with ATP. The disordered stretch occupies residues 246–270 (AKDKEEEERMAKEELEKEQEQAKEK). The short motif at 378-381 (DEAD) is the DEAD box element. One can recognise a Helicase C-terminal domain in the interval 480 to 656 (DVGYQVTGQK…EAMYRGQALI (177 aa)).

This sequence belongs to the DEAD box helicase family. MRH4 subfamily.

It localises to the mitochondrion. The catalysed reaction is ATP + H2O = ADP + phosphate + H(+). ATP-binding RNA helicase involved in mitochondrial RNA metabolism. Required for maintenance of mitochondrial DNA. The sequence is that of ATP-dependent RNA helicase MRH4, mitochondrial (MRH4) from Coccidioides immitis (strain RS) (Valley fever fungus).